We begin with the raw amino-acid sequence, 665 residues long: Long chain acyl-CoA synthetase 3 (665 aa).

Position 228–239 (228–239 (IMYTSGTTGDPK)) interacts with ATP. Positions 495 to 519 (DGWLHTGDVGEWQPDGAMKIIDRKK) are fatty acid-binding.

This sequence belongs to the ATP-dependent AMP-binding enzyme family. Requires Mg(2+) as cofactor.

It carries out the reaction a long-chain fatty acid + ATP + CoA = a long-chain fatty acyl-CoA + AMP + diphosphate. It functions in the pathway lipid metabolism; fatty acid metabolism. Activation of long-chain fatty acids for both synthesis of cellular lipids, and degradation via beta-oxidation. Preferentially uses palmitate, palmitoleate, oleate and linoleate. This Arabidopsis thaliana (Mouse-ear cress) protein is Long chain acyl-CoA synthetase 3 (LACS3).